Consider the following 426-residue polypeptide: Gamma-glutamyl phosphate reductase (426 aa).

Belongs to the gamma-glutamyl phosphate reductase family.

It localises to the cytoplasm. It carries out the reaction L-glutamate 5-semialdehyde + phosphate + NADP(+) = L-glutamyl 5-phosphate + NADPH + H(+). It participates in amino-acid biosynthesis; L-proline biosynthesis; L-glutamate 5-semialdehyde from L-glutamate: step 2/2. In terms of biological role, catalyzes the NADPH-dependent reduction of L-glutamate 5-phosphate into L-glutamate 5-semialdehyde and phosphate. The product spontaneously undergoes cyclization to form 1-pyrroline-5-carboxylate. This Cupriavidus necator (strain ATCC 17699 / DSM 428 / KCTC 22496 / NCIMB 10442 / H16 / Stanier 337) (Ralstonia eutropha) protein is Gamma-glutamyl phosphate reductase.